Consider the following 710-residue polypeptide: MLGKGIKKSWGWLGLTVLLLGSPCGWAAEFSASFKGTDIQEFINTVSKNLNKTVIIDPTVRGTISVRSYDMMNEGQYYQFFLSVLDVYGFSVVPMDNGVLKVIRSKDAKSSSIPLANNEQPGIGDELVTRVVPLNNVAARDLAPLLRQLNDNAGAGTVVHYEPSNVLLMTGRAAVIKRLVDIVNTVDKTGDREMVTVPLTYASAEDVAKLVNDLNKSDEKNALPSTMLANVVADGRTNSVVVSGEENARQRAVEMIRQLDRKQVVQGGTKVIYLKYAKALDLIEVLAGNGTSGNRNSSSSNASRPSSPRSGSSSNSNSSSGSSGSSSGSSSSSSSSSSMGFGSAFGSTSSSGGRTITIQGKEVTVRAHDQTNSLIITAPPDIMRDLEQVINQLDIRRPQVLVEAIIAEIQDADGLNLGIQWANKRAGMTQFTNTGIPISTAVIGTDQFRSNGTLTTAYASALSSFNGVTAGFYRGNWSMLLTALSSDSKNDVLATPSIVTLDNMEATFNVGQEVPVLTGSQTTSADNIFNTVERKTVGIKLRVKPQINEGDSVLLQIEQEVSSVADSNSSTNSSLGVTFNTRTVNNAVMVTNGETVVVGGLLDKTSVESNDKVPLLGDIPWLGSLFRSKSQEVRKRNLMLFLRPTIIRDPGQFQEASINKYRSFNNEQQQQRGEGNGVLDNNTLRLSGGNTYTFRQVQSSISDFYKPEGR.

The signal sequence occupies residues 1–27; the sequence is MLGKGIKKSWGWLGLTVLLLGSPCGWA. The tract at residues 28 to 105 is N0; that stretch reads AEFSASFKGT…DNGVLKVIRS (78 aa). The interval 123–190 is N1; that stretch reads IGDELVTRVV…DIVNTVDKTG (68 aa). An N2 region spans residues 192–262; the sequence is REMVTVPLTY…VEMIRQLDRK (71 aa). Positions 288–399 are N3; sequence GNGTSGNRNS…INQLDIRRPQ (112 aa). The segment at 289–353 is disordered; it reads NGTSGNRNSS…AFGSTSSSGG (65 aa). Residues 401–648 are secretin; that stretch reads LVEAIIAEIQ…MLFLRPTIIR (248 aa). The tract at residues 691 to 710 is s domain; that stretch reads TYTFRQVQSSISDFYKPEGR.

It belongs to the bacterial secretin family. GSP D subfamily. In terms of assembly, forms a cylindrical channel with 15 subunits. Interacts with pilotin OutS.

It is found in the cell outer membrane. In terms of biological role, involved in a type II secretion system (T2SS, formerly general secretion pathway, GSP) for the export of proteins. Required for the translocation of the multiple pectic enzymes. This subunit forms the outer membrane channel. This Dickeya dadantii (strain 3937) (Erwinia chrysanthemi (strain 3937)) protein is Secretin OutD (outD).